The sequence spans 1464 residues: Collagen alpha-1(III) chain (1464 aa).

A signal peptide spans 1-23 (MMSFVQSGTWFLLTLLHPTLILA). A propeptide spans 24–154 (QQSNVDELGC…CPTGGQNYSP (131 aa)) (N-terminal propeptide). Residues 31-90 (LGCSHLGQSYESRDVWKPEPCQICVCDSGSVLCDDIICDEEPLDCPNPEIPFGECCAICP) enclose the VWFC domain. A disordered region spans residues 97–1195 (PVLPDGHGPQ…PGPPGAPGPC (1099 aa)). Over residues 100–109 (PDGHGPQGPK) the composition is skewed to low complexity. Positions 147 to 156 (TGGQNYSPQF) are enriched in polar residues. Positions 155–169 (QFDSYDVKSGVGGMG) are nonhelical region (N-terminal). Gly residues predominate over residues 164–173 (GVGGMGGYPG). The interval 170-1195 (GYPGPAGPPG…PGPPGAPGPC (1026 aa)) is triple-helical region. Residues 174–184 (PAGPPGPPGPP) are compositionally biased toward pro residues. Positions 186–198 (SSGHPGSPGSPGY) are enriched in low complexity. A compositionally biased stretch (basic and acidic residues) spans 228–240 (KDGESGRPGRPGE). 5-hydroxylysine; alternate is present on lysine 262. O-linked (Gal...) hydroxylysine; alternate glycosylation is present at lysine 262. The segment covering 265 to 276 (RGFDGRNGEKGE) has biased composition (basic and acidic residues). A 5-hydroxylysine modification is found at lysine 283. Composition is skewed to low complexity over residues 310–321 (PGLPGAAGARGN) and 354–379 (PAGSPGSNGSPGQRGEPGPQGHAGAQ). The segment covering 389–398 (GSPGGKGEMG) has biased composition (gly residues). The span at 399-412 (PAGIPGAPGLIGAR) shows a compositional bias: low complexity. Over residues 527–548 (GTPGGPGIRGMPGSPGGPGNDG) the composition is skewed to gly residues. The segment covering 606–615 (PAGKNGETGP) has biased composition (low complexity). Gly residues-rich tracts occupy residues 641–650 (GIPGTGGPPG) and 668–677 (GAPGGKGDSG). Positions 678 to 691 (APGERGPPGTAGIP) are enriched in low complexity. The span at 692 to 708 (GARGGAGPPGPEGGKGP) shows a compositional bias: gly residues. Low complexity predominate over residues 717 to 727 (ASGSPGLQGMP). Basic and acidic residues predominate over residues 822–834 (AKGERGAPGEKGE). Lysine 859 carries the 5-hydroxylysine modification. The segment covering 863 to 879 (GSPGGPGTAGFPGGRGL) has biased composition (gly residues). Residues 889-906 (PGPPGPSGAPGKDGPPGP) show a composition bias toward pro residues. Low complexity-rich tracts occupy residues 907-934 (AGNSGSPGNPGIAGPKGDAGQPGEKGPP) and 945-960 (PLGIAGLTGARGLAGP). Lysine 976 bears the 5-hydroxylysine mark. Residues 1045–1054 (PGHPGPPGPV) are compositionally biased toward pro residues. Low complexity predominate over residues 1068-1084 (PAGPSGAPGPAGARGAP). Lysine 1093 and lysine 1105 each carry 5-hydroxylysine. The span at 1120-1132 (PGAAGHQGAIGSP) shows a compositional bias: low complexity. Over residues 1180 to 1192 (PGQPGPPGPPGAP) the composition is skewed to pro residues. A propeptide spans 1220–1464 (DDPMDFKINT…GVDIGPVCFL (245 aa)) (C-terminal propeptide). Residues 1230 to 1464 (EEIMSSLKSV…GVDIGPVCFL (235 aa)) enclose the Fibrillar collagen NC1 domain. Intrachain disulfides connect cysteine 1260–cysteine 1292, cysteine 1300–cysteine 1462, and cysteine 1370–cysteine 1415. Ca(2+)-binding residues include aspartate 1278, asparagine 1280, glutamine 1281, cysteine 1283, and aspartate 1286.

Belongs to the fibrillar collagen family. Trimers of identical alpha 1(III) chains. The chains are linked to each other by interchain disulfide bonds. Trimers are also cross-linked via hydroxylysines. Interacts with ADGRG1. Post-translationally, proline residues at the third position of the tripeptide repeating unit (G-X-Y) are hydroxylated in some or all of the chains. In terms of processing, O-linked glycan consists of a Glc-Gal disaccharide bound to the oxygen atom of a post-translationally added hydroxyl group. As to expression, expressed in embryonic brain, specifically in the meninges, pial basement membrane and blood vessels (at protein level).

The protein resides in the secreted. Its subcellular location is the extracellular space. It localises to the extracellular matrix. Functionally, collagen type III occurs in most soft connective tissues along with type I collagen. Involved in regulation of cortical development. Is the major ligand of ADGRG1 in the developing brain and binding to ADGRG1 inhibits neuronal migration and activates the RhoA pathway by coupling ADGRG1 to GNA13 and possibly GNA12. This chain is Collagen alpha-1(III) chain (Col3a1), found in Mus musculus (Mouse).